We begin with the raw amino-acid sequence, 802 residues long: Potassium channel AKT2/3 (802 aa).

Over 1 to 79 (MDLKYSASHC…PMDSRYRCWE (79 aa)) the chain is Cytoplasmic. Residues 80–100 (FYMVLLVAYSAWVYPFEVAFL) traverse the membrane as a helical segment. The Extracellular segment spans residues 101 to 109 (NSSPKRNLC). The chain crosses the membrane as a helical span at residues 110 to 130 (IADNIVDLFFAVDIVLTFFVA). At 131-153 (YIDERTQLLVREPKQIAVRYLST) the chain is on the cytoplasmic side. The helical transmembrane segment at 154 to 174 (WFLMDVASTIPFDAIGYLITG) threads the bilayer. Residues 175–183 (TSTLNITCN) are Extracellular-facing. A glycan (N-linked (GlcNAc...) asparagine) is linked at Asn-179. The chain crosses the membrane as a helical; Voltage-sensor span at residues 184-204 (LLGLLRFWRLRRVKHLFTRLE). Residues 205-218 (KDIRYSYFWIRCFR) are Cytoplasmic-facing. Residues 219-239 (LLSVTLFLVHCAGCSYYLIAD) form a helical membrane-spanning segment. Over 240–265 (RYPHQGKTWTDAIPNFTETSLSIRYI) the chain is Extracellular. Asn-254 carries N-linked (GlcNAc...) asparagine glycosylation. An intramembrane region (pore-forming) is located at residues 266 to 285 (AAIYWSITTMTTVGYGDLHA). The Extracellular portion of the chain corresponds to 286–288 (SNT). The chain crosses the membrane as a helical span at residues 289–309 (IEMVFITVYMLFNLGLTAYLI). The Cytoplasmic portion of the chain corresponds to 310–802 (GNMTNLVVEG…KLYFVVNKII (493 aa)). 394 to 513 (LFKGVSREIL…ATMLKNFLQH (120 aa)) lines the a nucleoside 3',5'-cyclic phosphate pocket. 5 ANK repeats span residues 540-569 (NIAS…SPDI), 573-602 (KGKT…NIHI), 606-636 (NGNS…SDPH), 637-666 (IAGD…NVDT), and 670-699 (HGVT…DVVC). One can recognise a KHA domain in the interval 725 to 802 (RVSIYRGHPL…KLYFVVNKII (78 aa)).

Belongs to the potassium channel family. Plant (TC 1.A.1.4) subfamily. The potassium channel is probably composed of a homo- or heterotetrameric complex of pore-forming subunits. Interacts with the phosphatase PPC2A and the kinase CIPK6. May interact with AKT1, KAT1 and KAT3. Interacts with SLAC1. Post-translationally, dephosphorylated by PP2CA. As to expression, expressed mainly in the phloem tissues throughout the plant but also, at a lower level, in leaf epiderm, mesophyll and guard cells.

The protein resides in the endoplasmic reticulum membrane. Highly selective and weak inward-rectifying potassium channel. Plays a role in both loading and unloading potassium into/from the phloem sap. Seems to control sugar loading into phloem via a voltage-dependent process. Blocked by physiological concentrations of external calcium and by external acidification. May interact with the cytoskeleton or with regulatory proteins. Dephosphorylation by PP2CA not only leads to the inhibition of potassium currents but also to an increase of the voltage-dependence of the channel. Regulated by the CBL4/CIPK6 calcium sensor/protein kinase complex via a kinase interaction-dependent but phosphorylation-independent translocation of the channel to the plasma membrane. The sequence is that of Potassium channel AKT2/3 (AKT2) from Arabidopsis thaliana (Mouse-ear cress).